The chain runs to 144 residues: Ninjurin-2 (144 aa).

The Extracellular portion of the chain corresponds to 1–62 (MESDREIIHL…KSVLEQGPFS (62 aa)). The segment at 27–39 (NHYATKKSVAESM) is helix alpha1. The helix alpha2 stretch occupies residues 40–59 (LDVALFMSNAMRLKSVLEQG). A helical membrane pass occupies residues 63 to 94 (QYYTTLLTLISASLLLQVVIGILLVVIARLNL). Residues 95 to 98 (NEVE) are Cytoplasmic-facing. The chain crosses the membrane as a helical span at residues 99-128 (NQWRLNQLNNAATTLVFITVVINIFITAFG). Gln105 is a cholesterol binding site. Topologically, residues 129–144 (AHKTGSVAARTSSNPI) are extracellular.

The protein belongs to the ninjurin family. As to quaternary structure, homooligomer; in response to stimuli, homooligomerizes into filaments. In contrast to NINJ1, the filament is curved toward the intracellular space, preventing its circularization on a relatively flat membrane to mediate plasma membrane rupture: curvature is caused by cholesterol-binding at the cytoplasmic leaflet.

The protein localises to the cell membrane. In terms of biological role, its role in unclear. In contrast to NINJ1 paralog, does not mediate plasma membrane rupture (cytolysis) downstream of necroptotic and pyroptotic programmed cell death. While it is able to oligomerize and form filaments, filaments are curved toward the intracellular space, preventing circularization to mediate plasma membrane rupture. May act as a homophilic transmembrane adhesion molecule involved in nerve regeneration. Promotes axonal growth. The polypeptide is Ninjurin-2 (Ninj2) (Rattus norvegicus (Rat)).